The sequence spans 609 residues: Alpha-fetoprotein (609 aa).

The N-terminal stretch at Met1–Ser18 is a signal peptide. Albumin domains lie at Arg19–Thr210, Lys211–Gln402, and Lys403–Ser601. His22 is a Cu(2+) binding site. Asn42 carries N-linked (GlcNAc...) asparagine glycosylation. Intrachain disulfides connect Cys99-Cys114, Cys113-Cys124, Cys148-Cys193, Cys192-Cys201, Cys224-Cys270, Cys269-Cys277, Cys289-Cys303, and Cys302-Cys313. A phosphoserine mark is found at Ser111, Ser115, and Ser117. Asn251 carries an N-linked (GlcNAc...) asparagine glycan. Ser344 is modified (phosphoserine). 7 disulfides stabilise this stretch: Cys384-Cys393, Cys416-Cys462, Cys461-Cys472, Cys485-Cys501, Cys500-Cys511, Cys538-Cys583, and Cys582-Cys591. Residue Ser444 is modified to Phosphoserine.

This sequence belongs to the ALB/AFP/VDB family. As to quaternary structure, dimeric and trimeric forms have been found in addition to the monomeric form. As to expression, plasma. Synthesized by the fetal liver and yolk sac.

The protein localises to the secreted. Its function is as follows. Binds copper, nickel, and fatty acids as well as, and bilirubin less well than, serum albumin. This Pan troglodytes (Chimpanzee) protein is Alpha-fetoprotein (AFP).